The chain runs to 97 residues: Exodeoxyribonuclease 7 small subunit (97 aa).

The tract at residues 1–22 is disordered; sequence MAKTASPGDTAAGNGTEPLPDK.

The protein belongs to the XseB family. Heterooligomer composed of large and small subunits.

It is found in the cytoplasm. The enzyme catalyses Exonucleolytic cleavage in either 5'- to 3'- or 3'- to 5'-direction to yield nucleoside 5'-phosphates.. Bidirectionally degrades single-stranded DNA into large acid-insoluble oligonucleotides, which are then degraded further into small acid-soluble oligonucleotides. This Burkholderia vietnamiensis (strain G4 / LMG 22486) (Burkholderia cepacia (strain R1808)) protein is Exodeoxyribonuclease 7 small subunit.